The sequence spans 314 residues: tRNA pseudouridine synthase B (314 aa).

Histidine 43 is a binding site for substrate. Catalysis depends on aspartate 48, which acts as the Nucleophile. Substrate-binding residues include tyrosine 76, tyrosine 179, and leucine 200.

This sequence belongs to the pseudouridine synthase TruB family. Type 1 subfamily.

The enzyme catalyses uridine(55) in tRNA = pseudouridine(55) in tRNA. Responsible for synthesis of pseudouridine from uracil-55 in the psi GC loop of transfer RNAs. The chain is tRNA pseudouridine synthase B from Salmonella paratyphi A (strain ATCC 9150 / SARB42).